A 366-amino-acid polypeptide reads, in one-letter code: Dof zinc finger protein DOF1.3 (366 aa).

The interval Asp22 to Lys103 is disordered. 2 stretches are compositionally biased toward low complexity: residues Ser25–Leu45 and Thr56–Asn69. Basic and acidic residues-rich tracts occupy residues Glu70–Ser83 and Glu91–Lys103. The segment at Leu105–Gly159 adopts a Dof-type zinc-finger fold. Zn(2+) is bound by residues Cys107, Cys110, Cys132, and Cys135.

Its subcellular location is the nucleus. Transcription factor that binds specifically to a 5'-AA[AG]G-3' consensus core sequence. This Arabidopsis thaliana (Mouse-ear cress) protein is Dof zinc finger protein DOF1.3 (DOF1.3).